A 496-amino-acid chain; its full sequence is DNA-directed DNA/RNA polymerase mu (496 aa).

A disordered region spans residues 1–22 (MLPKRRRVRAGSPHSAVASSTP). The residue at position 12 (Ser12) is a Phosphoserine. The span at 12–22 (SPHSAVASSTP) shows a compositional bias: low complexity. The 100-residue stretch at 23–122 (PSVVRFPDVA…QPVPEEGRHH (100 aa)) folds into the BRCT domain. Na(+) contacts are provided by Thr241 and Val243. An involved in ssDNA binding region spans residues 323-332 (RGKLQGHDVD). Asp330, Asp332, and Asp420 together coordinate Mg(2+).

This sequence belongs to the DNA polymerase type-X family. The cofactor is Mg(2+).

It localises to the nucleus. The catalysed reaction is DNA(n) + a 2'-deoxyribonucleoside 5'-triphosphate = DNA(n+1) + diphosphate. In terms of biological role, gap-filling polymerase involved in repair of DNA double-strand breaks by non-homologous end joining (NHEJ). Participates in immunoglobulin (Ig) light chain gene rearrangement in V(D)J recombination. The sequence is that of DNA-directed DNA/RNA polymerase mu (Polm) from Mus musculus (Mouse).